We begin with the raw amino-acid sequence, 770 residues long: Pyrophosphate-energized vacuolar membrane proton pump 1 (770 aa).

Residues 1–9 are Intravacuolar-facing; that stretch reads MVAPALLPE. A helical membrane pass occupies residues 10–36; sequence LWTEILVPICAVIGIAFSLFQWYVVSR. At 37 to 88 the chain is on the cytoplasmic side; sequence VKLTSDLGASSSGGANNGKNGYGDYLIEEEEGVNDQSVVAKCAEIQTAISEG. The chain crosses the membrane as a helical span at residues 89–118; that stretch reads ATSFLFTEYKYVGVFMIFFAAVIFVFLGSV. The Intravacuolar portion of the chain corresponds to 119–139; that stretch reads EGFSTDNKPCTYDTTRTCKPA. A disulfide bond links Cys-128 and Cys-136. A helical transmembrane segment spans residues 140–167; sequence LATAAFSTIAFVLGAVTSVLSGFLGMKI. At 168 to 190 the chain is on the cytoplasmic side; it reads ATYANARTTLEARKGVGKAFIVA. The chain crosses the membrane as a helical span at residues 191–220; it reads FRSGAVMGFLLAASGLLVLYITINVFKIYY. The Intravacuolar segment spans residues 221 to 223; it reads GDD. A helical membrane pass occupies residues 224-252; it reads WEGLFEAITGYGLGGSSMALFGRVGGGIY. The Cytoplasmic portion of the chain corresponds to 253 to 290; sequence TKAADVGADLVGKIERNIPEDDPRNPAVIADNVGDNVG. Substrate is bound at residue Lys-254. Mg(2+)-binding residues include Asp-257, Asp-261, and Asp-287. Residues 291–316 form a helical membrane-spanning segment; that stretch reads DIAGMGSDLFGSYAEASCAALVVASI. At 317–324 the chain is on the intravacuolar side; that stretch reads SSFGINHD. A helical membrane pass occupies residues 325–350; sequence FTAMCYPLLISSMGILVCLITTLFAT. Over 351–358 the chain is Cytoplasmic; that stretch reads DFFEIKLV. A helical transmembrane segment spans residues 359 to 386; sequence KEIEPALKNQLIISTVIMTVGIAIVSWV. The Intravacuolar portion of the chain corresponds to 387 to 405; the sequence is GLPTSFTIFNFGTQKVVKN. The chain crosses the membrane as a helical span at residues 406–429; the sequence is WQLFLCVCVGLWAGLIIGFVTEYY. Topologically, residues 430-451 are cytoplasmic; that stretch reads TSNAYSPVQDVADSCRTGAATN. The chain crosses the membrane as a helical span at residues 452–476; the sequence is VIFGLALGYKSVIIPIFAIAISIFV. Over 477 to 482 the chain is Intravacuolar; that stretch reads SFSFAA. The chain crosses the membrane as a helical span at residues 483-509; it reads MYGVAVAALGMLSTIATGLAIDAYGPI. Over 510–538 the chain is Cytoplasmic; it reads SDNAGGIAEMAGMSHRIRERTDALDAAGN. Mg(2+) contacts are provided by Asp-511 and Asn-538. The helical transmembrane segment at 539 to 567 threads the bilayer; it reads TTAAIGKGFAIGSAALVSLALFGAFVSRA. Residues 568-577 lie on the Intravacuolar side of the membrane; sequence GIHTVDVLTP. Residues 578 to 606 form a helical membrane-spanning segment; the sequence is KVIIGLLVGAMLPYWFSAMTMKSVGSAAL. At 607–635 the chain is on the cytoplasmic side; the sequence is KMVEEVRRQFNTIPGLMEGTAKPDYATCV. A helical transmembrane segment spans residues 636 to 664; it reads KISTDASIKEMIPPGCLVMLTPLIVGFFF. A topological domain (intravacuolar) is located at residue Gly-665. A helical transmembrane segment spans residues 666–693; sequence VETLSGVLAGSLVSGVQIAISASNTGGA. Topologically, residues 694 to 736 are cytoplasmic; the sequence is WDNAKKYIEAGVSEHAKSLGPKGSEPHKAAVIGDTIGDPLKDT. The Mg(2+) site is built by Asp-695 and Asp-731. Residue Lys-734 participates in substrate binding. Residues 737–762 form a helical membrane-spanning segment; it reads SGPSLNILIKLMAVESLVFAPFFATH. Topologically, residues 763-770 are intravacuolar; it reads GGILFKYF.

Belongs to the H(+)-translocating pyrophosphatase (TC 3.A.10) family. K(+)-stimulated subfamily. Monomer. In terms of tissue distribution, ubiquitous (at protein level). Mostly expressed in vascular tissues, meristems and root pericycle.

The protein localises to the vacuole membrane. It localises to the endosome membrane. The protein resides in the cell membrane. The catalysed reaction is diphosphate + H2O + H(+)(in) = 2 phosphate + 2 H(+)(out). Its activity is regulated as follows. Activated by K(+) and Mg(2+). Inhibited by Ca(2+), N,N'-dicyclohexylcarbodiimide (DCCD), N-ethylmaleimide (NEM) and aminomethylenediphosphonate (AMDP), and, to a lower extent, by fluoride (KF). Its function is as follows. Contributes to the transtonoplast (from cytosol to vacuole lumen) H(+)-electrochemical potential difference. It establishes a proton gradient of similar and often greater magnitude than the H(+)-ATPase on the same membrane. In addition, facilitates auxin transport by modulating apoplastic pH and regulates auxin-mediated developmental processes. Confers tolerance to NaCl and to drought by increasing ion retention. In Arabidopsis thaliana (Mouse-ear cress), this protein is Pyrophosphate-energized vacuolar membrane proton pump 1 (AVP1).